Here is a 188-residue protein sequence, read N- to C-terminus: UPF0301 protein Smlt1098 (188 aa).

It belongs to the UPF0301 (AlgH) family.

This Stenotrophomonas maltophilia (strain K279a) protein is UPF0301 protein Smlt1098.